The primary structure comprises 460 residues: ATP synthase subunit beta (460 aa).

150 to 157 (GGAGVGKT) contacts ATP.

Belongs to the ATPase alpha/beta chains family. F-type ATPases have 2 components, CF(1) - the catalytic core - and CF(0) - the membrane proton channel. CF(1) has five subunits: alpha(3), beta(3), gamma(1), delta(1), epsilon(1). CF(0) has three main subunits: a(1), b(2) and c(9-12). The alpha and beta chains form an alternating ring which encloses part of the gamma chain. CF(1) is attached to CF(0) by a central stalk formed by the gamma and epsilon chains, while a peripheral stalk is formed by the delta and b chains.

The protein resides in the cell inner membrane. It carries out the reaction ATP + H2O + 4 H(+)(in) = ADP + phosphate + 5 H(+)(out). Functionally, produces ATP from ADP in the presence of a proton gradient across the membrane. The catalytic sites are hosted primarily by the beta subunits. This is ATP synthase subunit beta from Sodalis glossinidius (strain morsitans).